The primary structure comprises 217 residues: EF-hand domain-containing protein D2 homolog (217 aa).

The span at Met1–Ser28 shows a compositional bias: low complexity. The interval Met1–Glu29 is disordered. 2 consecutive EF-hand domains span residues Asn69 to Pro104 and Gln105 to Gly140. Asp82, Asp86, Glu93, Asp118, Asp120, Asp122, Lys124, and Glu129 together coordinate Ca(2+). Positions Glu191–Gln204 are enriched in basic and acidic residues. The disordered stretch occupies residues Glu191 to Gln217. Low complexity predominate over residues Arg206–Gln217.

This chain is EF-hand domain-containing protein D2 homolog (Swip-1), found in Drosophila melanogaster (Fruit fly).